The primary structure comprises 105 residues: NADH-quinone oxidoreductase subunit K (105 aa).

A run of 3 helical transmembrane segments spans residues 9 to 29 (PNYY…GVLV), 34 to 54 (IVLF…LVTF), and 65 to 85 (IMAF…LAII).

Belongs to the complex I subunit 4L family. In terms of assembly, NDH-1 is composed of 14 different subunits. Subunits NuoA, H, J, K, L, M, N constitute the membrane sector of the complex.

It localises to the cell membrane. It catalyses the reaction a quinone + NADH + 5 H(+)(in) = a quinol + NAD(+) + 4 H(+)(out). NDH-1 shuttles electrons from NADH, via FMN and iron-sulfur (Fe-S) centers, to quinones in the respiratory chain. The immediate electron acceptor for the enzyme in this species is believed to be a menaquinone. Couples the redox reaction to proton translocation (for every two electrons transferred, four hydrogen ions are translocated across the cytoplasmic membrane), and thus conserves the redox energy in a proton gradient. In Salinispora tropica (strain ATCC BAA-916 / DSM 44818 / JCM 13857 / NBRC 105044 / CNB-440), this protein is NADH-quinone oxidoreductase subunit K.